An 810-amino-acid chain; its full sequence is Type I restriction enzyme EcoAI endonuclease subunit (810 aa).

Residues Glu183 to Val343 form the Helicase ATP-binding domain. Residue Ala197–Thr203 participates in ATP binding. The Helicase C-terminal domain maps to Thr412–Glu575. Over residues Leu578–Gln588 the composition is skewed to acidic residues. Residues Leu578 to Val608 are disordered.

This sequence belongs to the HsdR family. As to quaternary structure, the type I restriction/modification system is composed of three polypeptides R, M and S. The restriction enzyme has stoichiometry R(2)M(2)S(1) while the methyltransferase is M(2)S(1).

The enzyme catalyses Endonucleolytic cleavage of DNA to give random double-stranded fragments with terminal 5'-phosphates, ATP is simultaneously hydrolyzed.. In terms of biological role, the subtype B restriction (R) subunit of a type I restriction enzyme that recognizes 5'-GAGN(7)GTCA-3' and cleaves a random distance away. Subunit R is required for both nuclease and ATPase activities, but not for modification. After locating a non-methylated recognition site, the enzyme complex serves as a molecular motor that translocates DNA in an ATP-dependent manner until a collision occurs that triggers cleavage. The chain is Type I restriction enzyme EcoAI endonuclease subunit from Escherichia coli.